We begin with the raw amino-acid sequence, 510 residues long: NAD(P)H-quinone oxidoreductase subunit 2, chloroplastic (510 aa).

11 helical membrane-spanning segments follow: residues 24 to 44 (LLLF…GLIL), 59 to 79 (WFYF…LFRW), 99 to 119 (IFQF…VEYI), 124 to 144 (MAIT…MFLC), 149 to 169 (LITI…LSGY), 183 to 203 (YLLM…WLYG), 295 to 315 (WHLL…LIAI), 323 to 343 (MLAY…IVGD), 347 to 367 (GYAS…GTFA), 395 to 415 (ALSS…AGFF), and 418 to 438 (LHLF…IGLL).

The protein belongs to the complex I subunit 2 family. As to quaternary structure, NDH is composed of at least 16 different subunits, 5 of which are encoded in the nucleus.

Its subcellular location is the plastid. It localises to the chloroplast thylakoid membrane. The catalysed reaction is a plastoquinone + NADH + (n+1) H(+)(in) = a plastoquinol + NAD(+) + n H(+)(out). It carries out the reaction a plastoquinone + NADPH + (n+1) H(+)(in) = a plastoquinol + NADP(+) + n H(+)(out). In terms of biological role, NDH shuttles electrons from NAD(P)H:plastoquinone, via FMN and iron-sulfur (Fe-S) centers, to quinones in the photosynthetic chain and possibly in a chloroplast respiratory chain. The immediate electron acceptor for the enzyme in this species is believed to be plastoquinone. Couples the redox reaction to proton translocation, and thus conserves the redox energy in a proton gradient. This chain is NAD(P)H-quinone oxidoreductase subunit 2, chloroplastic, found in Maianthemum racemosum (False Solomon's-seal).